Reading from the N-terminus, the 196-residue chain is Superoxide dismutase [Fe] (196 aa).

Residues His20, His68, Asp157, and His161 each contribute to the Fe cation site.

This sequence belongs to the iron/manganese superoxide dismutase family. In terms of assembly, homotetramer. It depends on Fe cation as a cofactor.

The enzyme catalyses 2 superoxide + 2 H(+) = H2O2 + O2. Its function is as follows. Destroys superoxide anion radicals which are normally produced within the cells and which are toxic to biological systems. This is Superoxide dismutase [Fe] from Tetrahymena pyriformis.